The following is a 199-amino-acid chain: MAFELPKLPYAFDALEPHFDKETMEIHHDRHHNTYVTKLNAAVEGTDLESKSIEEIVANLDSVPANIQTAVRNNGGGHLNHSLFWELLSPNSEEKGTVVEKIKEQWGSLEEFKKEFADKAAARFGSGWAWLVVNNGQLEIVTTPNQDNPLTEGKTPILGLDVWEHAYYLKYQNKRPDYIGAFWNVVNWEKVDELYNATK.

Fe(3+) contacts are provided by His-27, His-81, Asp-161, and His-165. Residues His-27, His-81, Asp-161, and His-165 each coordinate Mn(2+).

The protein belongs to the iron/manganese superoxide dismutase family. As to quaternary structure, homodimer. Can also form a heterodimer with SodM. It depends on Mn(2+) as a cofactor. Fe(3+) serves as cofactor.

It catalyses the reaction 2 superoxide + 2 H(+) = H2O2 + O2. In terms of biological role, destroys superoxide anion radicals which are normally produced within the cells and which are toxic to biological systems. Catalyzes the dismutation of superoxide anion radicals into O2 and H2O2 by successive reduction and oxidation of the transition metal ion at the active site. In Staphylococcus aureus (strain USA300), this protein is Superoxide dismutase [Mn/Fe] 1 (sodA).